Reading from the N-terminus, the 619-residue chain is DNA polymerase II small subunit (619 aa).

The tract at residues 78–122 is disordered; the sequence is EEAEKTVESQETRASELEEGGVSQVSSGELQELKEESPEISTTEE. Positions 79 to 93 are enriched in basic and acidic residues; that stretch reads EAEKTVESQETRASE.

Belongs to the DNA polymerase delta/II small subunit family. As to quaternary structure, heterodimer of a large subunit and a small subunit.

It catalyses the reaction DNA(n) + a 2'-deoxyribonucleoside 5'-triphosphate = DNA(n+1) + diphosphate. The enzyme catalyses Exonucleolytic cleavage in the 3'- to 5'-direction to yield nucleoside 5'-phosphates.. Its function is as follows. Possesses two activities: a DNA synthesis (polymerase) and an exonucleolytic activity that degrades single-stranded DNA in the 3' to 5' direction. Has a template-primer preference which is characteristic of a replicative DNA polymerase. The polypeptide is DNA polymerase II small subunit (polB) (Pyrococcus abyssi (strain GE5 / Orsay)).